Reading from the N-terminus, the 198-residue chain is Nucleoid occlusion factor SlmA (198 aa).

Residues 9-70 (RNRREEILQA…SLIEFIEDSL (62 aa)) enclose the HTH tetR-type domain. Positions 33–52 (TTAKLAANVGVSEAALYRHF) form a DNA-binding region, H-T-H motif. Positions 113–144 (ALMFEQDRLQDRINQLFERIESQLRQVLREHK) form a coiled coil.

This sequence belongs to the nucleoid occlusion factor SlmA family. As to quaternary structure, homodimer. Interacts with FtsZ.

It localises to the cytoplasm. The protein localises to the nucleoid. Functionally, required for nucleoid occlusion (NO) phenomenon, which prevents Z-ring formation and cell division over the nucleoid. Acts as a DNA-associated cell division inhibitor that binds simultaneously chromosomal DNA and FtsZ, and disrupts the assembly of FtsZ polymers. SlmA-DNA-binding sequences (SBS) are dispersed on non-Ter regions of the chromosome, preventing FtsZ polymerization at these regions. The sequence is that of Nucleoid occlusion factor SlmA from Pectobacterium carotovorum subsp. carotovorum (strain PC1).